The primary structure comprises 167 residues: Nascent polypeptide-associated complex subunit beta (167 aa).

Disordered stretches follow at residues 1 to 48 (MDQA…GADD) and 133 to 167 (QNMQ…SKVE). Residues 25–42 (NRNRGKGTPRRKVKKVHK) show a composition bias toward basic residues. An NAC-A/B domain is found at 45-110 (GADDKKLQAT…GEEKELTELV (66 aa)). Residues 148-161 (DEEDDIPDLVEGQD) show a composition bias toward acidic residues.

The protein belongs to the NAC-beta family. As to quaternary structure, part of the nascent polypeptide-associated complex (NAC), consisting of egd2 and egd1. NAC associates with ribosomes via egd1.

Its subcellular location is the cytoplasm. It is found in the nucleus. Functionally, component of the nascent polypeptide-associated complex (NAC), a dynamic component of the ribosomal exit tunnel, protecting the emerging polypeptides from interaction with other cytoplasmic proteins to ensure appropriate nascent protein targeting. The NAC complex also promotes mitochondrial protein import by enhancing productive ribosome interactions with the outer mitochondrial membrane and blocks the inappropriate interaction of ribosomes translating non-secretory nascent polypeptides with translocation sites in the membrane of the endoplasmic reticulum. EGD1 may act as a transcription factor that exert a negative effect on the expression of several genes that are transcribed by RNA polymerase II. The polypeptide is Nascent polypeptide-associated complex subunit beta (egd1) (Aspergillus terreus (strain NIH 2624 / FGSC A1156)).